Here is a 238-residue protein sequence, read N- to C-terminus: Large ribosomal subunit protein uL1 (238 aa).

It belongs to the universal ribosomal protein uL1 family. In terms of assembly, part of the 50S ribosomal subunit.

Binds directly to 23S rRNA. The L1 stalk is quite mobile in the ribosome, and is involved in E site tRNA release. Its function is as follows. Protein L1 is also a translational repressor protein, it controls the translation of the L11 operon by binding to its mRNA. The polypeptide is Large ribosomal subunit protein uL1 (Gloeobacter violaceus (strain ATCC 29082 / PCC 7421)).